A 229-amino-acid polypeptide reads, in one-letter code: Cytochrome c oxidase subunit 2 (229 aa).

Over 1 to 14 (MPTPNQTNFQDAAS) the chain is Mitochondrial intermembrane. A helical transmembrane segment spans residues 15–45 (PLMEELTHFHDHTLMIVFMISLLVLYILLSM). Residues 46-59 (LSTKLTHTNTANAQ) lie on the Mitochondrial matrix side of the membrane. Residues 60–87 (QAEMVWTILPAIILITIALPSLQILYMM) form a helical membrane-spanning segment. The Mitochondrial intermembrane portion of the chain corresponds to 88–229 (DEINKPHMTI…DLWLAMIDTL (142 aa)). Cu cation contacts are provided by His-161, Cys-196, Glu-198, Cys-200, His-204, and Met-207. Glu-198 provides a ligand contact to Mg(2+).

It belongs to the cytochrome c oxidase subunit 2 family. Component of the cytochrome c oxidase (complex IV, CIV), a multisubunit enzyme composed of 14 subunits. The complex is composed of a catalytic core of 3 subunits MT-CO1, MT-CO2 and MT-CO3, encoded in the mitochondrial DNA, and 11 supernumerary subunits COX4I, COX5A, COX5B, COX6A, COX6B, COX6C, COX7A, COX7B, COX7C, COX8 and NDUFA4, which are encoded in the nuclear genome. The complex exists as a monomer or a dimer and forms supercomplexes (SCs) in the inner mitochondrial membrane with NADH-ubiquinone oxidoreductase (complex I, CI) and ubiquinol-cytochrome c oxidoreductase (cytochrome b-c1 complex, complex III, CIII), resulting in different assemblies (supercomplex SCI(1)III(2)IV(1) and megacomplex MCI(2)III(2)IV(2)). Found in a complex with TMEM177, COA6, COX18, COX20, SCO1 and SCO2. Interacts with TMEM177 in a COX20-dependent manner. Interacts with COX20. Interacts with COX16. Cu cation serves as cofactor.

Its subcellular location is the mitochondrion inner membrane. It carries out the reaction 4 Fe(II)-[cytochrome c] + O2 + 8 H(+)(in) = 4 Fe(III)-[cytochrome c] + 2 H2O + 4 H(+)(out). Its function is as follows. Component of the cytochrome c oxidase, the last enzyme in the mitochondrial electron transport chain which drives oxidative phosphorylation. The respiratory chain contains 3 multisubunit complexes succinate dehydrogenase (complex II, CII), ubiquinol-cytochrome c oxidoreductase (cytochrome b-c1 complex, complex III, CIII) and cytochrome c oxidase (complex IV, CIV), that cooperate to transfer electrons derived from NADH and succinate to molecular oxygen, creating an electrochemical gradient over the inner membrane that drives transmembrane transport and the ATP synthase. Cytochrome c oxidase is the component of the respiratory chain that catalyzes the reduction of oxygen to water. Electrons originating from reduced cytochrome c in the intermembrane space (IMS) are transferred via the dinuclear copper A center (CU(A)) of subunit 2 and heme A of subunit 1 to the active site in subunit 1, a binuclear center (BNC) formed by heme A3 and copper B (CU(B)). The BNC reduces molecular oxygen to 2 water molecules using 4 electrons from cytochrome c in the IMS and 4 protons from the mitochondrial matrix. The protein is Cytochrome c oxidase subunit 2 (MT-CO2) of Pelomedusa subrufa (African side-necked turtle).